The following is an 894-amino-acid chain: Sorting nexin-14 (894 aa).

One can recognise a PXA domain in the interval 78–252; sequence SSKVDASLSE…LLIIFIDDSP (175 aa). In terms of domain architecture, RGS spans 284 to 416; it reads ELKQIREQQD…CHSDEYFRQL (133 aa). Phosphoserine is present on Ser-496. Residues 518 to 638 enclose the PX domain; that stretch reads PYVDFFEDPS…DFLSPNGGET (121 aa).

Belongs to the sorting nexin family.

Its subcellular location is the cytoplasm. It is found in the cell projection. The protein localises to the dendrite. Functionally, plays a role in maintaining normal neuronal excitability and synaptic transmission. May be involved in several stages of intracellular trafficking. The chain is Sorting nexin-14 (SNX14) from Pongo abelii (Sumatran orangutan).